Reading from the N-terminus, the 280-residue chain is 2-dehydro-3-deoxyphosphooctonate aldolase (280 aa).

It belongs to the KdsA family.

The protein localises to the cytoplasm. It carries out the reaction D-arabinose 5-phosphate + phosphoenolpyruvate + H2O = 3-deoxy-alpha-D-manno-2-octulosonate-8-phosphate + phosphate. It functions in the pathway carbohydrate biosynthesis; 3-deoxy-D-manno-octulosonate biosynthesis; 3-deoxy-D-manno-octulosonate from D-ribulose 5-phosphate: step 2/3. Its pathway is bacterial outer membrane biogenesis; lipopolysaccharide biosynthesis. This Coxiella burnetii (strain CbuK_Q154) (Coxiella burnetii (strain Q154)) protein is 2-dehydro-3-deoxyphosphooctonate aldolase.